Here is a 398-residue protein sequence, read N- to C-terminus: MTEQVIGANSVPGIIAPDNVHVIQPSNPVASGNHLQPSEVTTYPISPKVIHCDTGRANLQNLLVVNQNSAAGVQSQPIGYQRQYPVGTASLQTVPGVIQYTQGTTNLQTWPGDLQNPLNANPGLTHTSNSSQWNTSFASFTSFNPKKFINEEVRTLGAIQILIGLTHIFSAINPVLYYYPFVTWLSGYPLWGGLSYIVSGSLSVWAAKDPSPCVVNSSISFNIISALFAFAGIFIIITDLSLYYVTTYSKAVSGGLLPFALLEFILTCVVSHFGCQATCCRQFENVAVIPTVFSFNPANTTTSPVNATTGPVNAATGPVSATNGPVNTTIHPVNTTTSPVNTTTSPVNVTTGPVNANIGPVNVTTGPVNTTTAPAKATTSCVNAIHTSNVPPNPRTKK.

A run of 4 helical transmembrane segments spans residues 156–176 (LGAIQILIGLTHIFSAINPVL), 178–198 (YYPFVTWLSGYPLWGGLSYIV), 218–238 (SISFNIISALFAFAGIFIIIT), and 251–271 (AVSGGLLPFALLEFILTCVVS). Residues 316–346 (TGPVSATNGPVNTTIHPVNTTTSPVNTTTSP) are disordered. A compositionally biased stretch (polar residues) spans 319 to 331 (VSATNGPVNTTIH). Positions 332-346 (PVNTTTSPVNTTTSP) are enriched in low complexity.

The protein belongs to the MS4A family.

It localises to the membrane. This is Membrane-spanning 4-domains subfamily A member 18 (MS4A18) from Homo sapiens (Human).